A 568-amino-acid chain; its full sequence is MVFFPEEVVEHILGFLASHRDRNAVSLVCREWYRVERLSRRSVLVRNCYAARPERVHARFPGLRSLSVKGRPRFVPAGWGAAARPWVAACVAACPGLEELRLKRMVVTDGCLKLLACSFPNLKSLVLVGCQGFSTDGLATVATNCRFMKELDLQESLVEDRDSRWLGCFPKPSTLLESLNFSCLTGEVNSPALEILVARSPNLRSLRLNRSVPLDVLARILCRRPRLVDLCTGSFVRGNIVGAYAGLFNSFQHCSLLKSLSGFWDATSLFIPVIAPVCKNLTCLNLSSAPMVRSAYLIEFICQCKKLQQLWVLDHIGDEGLKIVASSCIQLQELRVFPANANARASTVTEEGLVAISAGCNKLQSVLYFCQRMTNSALITVAKNCPRFTSFRLCVLDPGSADAVTGQPLDEGYGAIVQSCKGLRRLCLSGLLTDTVFLYIGMYAERLEMLSVAFAGDTDDGMTYVLNGCKNLKKLEIRDSPFGDSALLAGMHQYEAMRSLWLSSCNVTLGGCKSLAASMANLNIEVMNRAASINEADNANDAKKVKKLYIYRTVAGPRGDAPEFISTF.

An F-box domain is found at 1–45 (MVFFPEEVVEHILGFLASHRDRNAVSLVCREWYRVERLSRRSVLV). Residues K69, 103–104 (KR), and R335 contribute to the 1D-myo-inositol hexakisphosphate site. The segment at 338-343 (PANANA) is interaction with auxin-responsive proteins. Residue 390 to 392 (SFR) participates in 1D-myo-inositol hexakisphosphate binding. Residues 394–398 (CVLDP) are interaction with auxin-responsive proteins. R425 serves as a coordination point for 1D-myo-inositol hexakisphosphate. Residues 453–454 (AF) form an interaction with auxin-responsive proteins region. Residues 473 to 474 (KK) and R498 contribute to the 1D-myo-inositol hexakisphosphate site.

Part of a SCF (SKP1-cullin-F-box) protein ligase complex. May interact with auxin and auxin-responsive proteins.

The protein resides in the nucleus. It participates in protein modification; protein ubiquitination. This is Transport inhibitor response 1-like protein Os11g0515500 from Oryza sativa subsp. japonica (Rice).